The chain runs to 289 residues: uncharacterized protein (289 aa).

The region spanning 2–62 is the HTH tetR-type domain; it reads NEKKERIIKT…SACEYYIGMS (61 aa). The segment at residues 25-44 is a DNA-binding region (H-T-H motif); sequence TIQEIASECGISKGAFYLHF.

This is an uncharacterized protein from Bacillus subtilis (strain 168).